Consider the following 306-residue polypeptide: Epoxyqueuosine reductase (306 aa).

D131 acts as the Proton donor in catalysis. One can recognise a 4Fe-4S ferredoxin-type domain in the interval 173–205 (LDLTYDHPVTDHCGTCTACIDACPTQAIVQPYV). [4Fe-4S] cluster-binding residues include C185, C188, C191, C195, C211, C238, C241, and C245.

The protein belongs to the QueG family. As to quaternary structure, monomer. It depends on cob(II)alamin as a cofactor. [4Fe-4S] cluster is required as a cofactor.

It localises to the cytoplasm. It carries out the reaction epoxyqueuosine(34) in tRNA + AH2 = queuosine(34) in tRNA + A + H2O. It functions in the pathway tRNA modification; tRNA-queuosine biosynthesis. In terms of biological role, catalyzes the conversion of epoxyqueuosine (oQ) to queuosine (Q), which is a hypermodified base found in the wobble positions of tRNA(Asp), tRNA(Asn), tRNA(His) and tRNA(Tyr). The polypeptide is Epoxyqueuosine reductase (Cellulophaga algicola (strain DSM 14237 / IC166 / ACAM 630)).